We begin with the raw amino-acid sequence, 99 residues long: Aspartyl/glutamyl-tRNA(Asn/Gln) amidotransferase subunit C (99 aa).

Belongs to the GatC family. Heterotrimer of A, B and C subunits.

The enzyme catalyses L-glutamyl-tRNA(Gln) + L-glutamine + ATP + H2O = L-glutaminyl-tRNA(Gln) + L-glutamate + ADP + phosphate + H(+). It catalyses the reaction L-aspartyl-tRNA(Asn) + L-glutamine + ATP + H2O = L-asparaginyl-tRNA(Asn) + L-glutamate + ADP + phosphate + 2 H(+). In terms of biological role, allows the formation of correctly charged Asn-tRNA(Asn) or Gln-tRNA(Gln) through the transamidation of misacylated Asp-tRNA(Asn) or Glu-tRNA(Gln) in organisms which lack either or both of asparaginyl-tRNA or glutaminyl-tRNA synthetases. The reaction takes place in the presence of glutamine and ATP through an activated phospho-Asp-tRNA(Asn) or phospho-Glu-tRNA(Gln). The sequence is that of Aspartyl/glutamyl-tRNA(Asn/Gln) amidotransferase subunit C from Mycobacterium leprae (strain Br4923).